A 742-amino-acid chain; its full sequence is MEEGFRDRAAFIRGAKDIAKEVKKHAAKKVVKGLDRVQDEYSRRSYSRFEEEDDDDDFPAPSDSYYRGEGTQDEEEGGASSDATEGHDEDDEIYEGEYQGIPRAESGGKGERMADGAPLAGVRGGLSDGEGPPGGRGEAQRRKEREELAQQYEAILRECGHGRFQWTLYFVLGLALMADGVEVFVVGFVLPSAEKDMCLSDSNKGMLGLIVYLGMMVGAFLWGGLADRLGRRQCLLISLSVNSVFAFFSSFVQGYGTFLFCRLLSGVGIGGSIPIVFSYFSEFLAQEKRGEHLSWLCMFWMIGGVYAAAMAWAIIPHYGWSFQMGSAYQFHSWRVFVLVCAFPSVFAIGALTTQPESPRFFLENGKHDEAWMVLKQVHDTNMRAKGHPERVFSVTHIKTIHQEDELIEIQSDTGTWYQRWGVRALSLGGQVWGNFLSCFGPEYRRITLMMMGVWFTMSFSYYGLTVWFPDMIRHLQAVDYASRTKVFPGERVEHVTFNFTLENQIHRGGQYFNDKFIGLRLKSVSFEDSLFEECYFEDVTSSNTFFRNCTFINTVFYNTDLFEYKFVNSRLVNSTFLHNKEGCPLDVTGTGEGAYMVYFVSFLGTLAVLPGNIVSALLMDKIGRLRMLAGSSVMSCVSCFFLSFGNSESAMIALLCLFGGVSIASWNALDVLTVGLYPSDKRTTAFGFLNALCKLAAVLGISIFTSFVGITKAAPIPFASAALALGSSLALKLPETRGQVLQ.

The interaction with SYT1 stretch occupies residues 1–57; that stretch reads MEEGFRDRAAFIRGAKDIAKEVKKHAAKKVVKGLDRVQDEYSRRSYSRFEEEDDDDD. The Cytoplasmic portion of the chain corresponds to 1–169; the sequence is MEEGFRDRAA…GHGRFQWTLY (169 aa). Residues 33 to 49 are compositionally biased toward basic and acidic residues; the sequence is GLDRVQDEYSRRSYSRF. The tract at residues 33–144 is disordered; sequence GLDRVQDEYS…GRGEAQRRKE (112 aa). Phosphoserine occurs at positions 80 and 81. At Thr84 the chain carries Phosphothreonine. Residues 122 to 137 show a composition bias toward gly residues; the sequence is VRGGLSDGEGPPGGRG. At Ser127 the chain carries Phosphoserine. A helical transmembrane segment spans residues 170-190; sequence FVLGLALMADGVEVFVVGFVL. Topologically, residues 191–205 are extracellular; sequence PSAEKDMCLSDSNKG. The helical transmembrane segment at 206–226 threads the bilayer; the sequence is MLGLIVYLGMMVGAFLWGGLA. Topologically, residues 227–233 are cytoplasmic; sequence DRLGRRQ. Residues 234-254 traverse the membrane as a helical segment; it reads CLLISLSVNSVFAFFSSFVQG. Over 255–262 the chain is Extracellular; that stretch reads YGTFLFCR. Residues 263–283 form a helical membrane-spanning segment; sequence LLSGVGIGGSIPIVFSYFSEF. At 284–294 the chain is on the cytoplasmic side; the sequence is LAQEKRGEHLS. Residues 295–315 traverse the membrane as a helical segment; that stretch reads WLCMFWMIGGVYAAAMAWAII. Residues 316-334 are Extracellular-facing; it reads PHYGWSFQMGSAYQFHSWR. Residues 335 to 355 traverse the membrane as a helical segment; it reads VFVLVCAFPSVFAIGALTTQP. At 356–447 the chain is on the cytoplasmic side; it reads ESPRFFLENG…CFGPEYRRIT (92 aa). At Ser393 the chain carries Phosphoserine. Residues 448 to 468 traverse the membrane as a helical segment; that stretch reads LMMMGVWFTMSFSYYGLTVWF. At 469–598 the chain is on the extracellular side; it reads PDMIRHLQAV…GTGEGAYMVY (130 aa). The residue at position 480 (Tyr480) is a Phosphotyrosine. N-linked (GlcNAc...) asparagine glycosylation is found at Asn498, Asn548, and Asn573. A helical membrane pass occupies residues 599-619; the sequence is FVSFLGTLAVLPGNIVSALLM. The Cytoplasmic portion of the chain corresponds to 620-626; it reads DKIGRLR. The helical transmembrane segment at 627-647 threads the bilayer; that stretch reads MLAGSSVMSCVSCFFLSFGNS. Topologically, residues 648-651 are extracellular; it reads ESAM. Residues 652-672 form a helical membrane-spanning segment; the sequence is IALLCLFGGVSIASWNALDVL. The Cytoplasmic segment spans residues 673-690; that stretch reads TVGLYPSDKRTTAFGFLN. Residues 691–711 form a helical membrane-spanning segment; that stretch reads ALCKLAAVLGISIFTSFVGIT. Lys712 is a topological domain (extracellular). Residues 713-733 form a helical membrane-spanning segment; it reads AAPIPFASAALALGSSLALKL. At 734-742 the chain is on the cytoplasmic side; sequence PETRGQVLQ.

Belongs to the major facilitator superfamily. In terms of assembly, interacts with SYT1/synaptotagmin-1 in a calcium-dependent manner. Binds the adapter protein complex AP-2. Post-translationally, phosphorylation by CK1 of the N-terminal cytoplasmic domain regulates interaction with SYT1. In terms of processing, N-glycosylated.

The protein resides in the presynapse. The protein localises to the cytoplasmic vesicle. It is found in the secretory vesicle. It localises to the synaptic vesicle membrane. Plays a role in the control of regulated secretion in neural and endocrine cells, enhancing selectively low-frequency neurotransmission. Positively regulates vesicle fusion by maintaining the readily releasable pool of secretory vesicles. The chain is Synaptic vesicle glycoprotein 2A (SV2A) from Macaca fascicularis (Crab-eating macaque).